The sequence spans 181 residues: Probable nicotinate-nucleotide adenylyltransferase (181 aa).

It belongs to the NadD family.

It catalyses the reaction nicotinate beta-D-ribonucleotide + ATP + H(+) = deamido-NAD(+) + diphosphate. It functions in the pathway cofactor biosynthesis; NAD(+) biosynthesis; deamido-NAD(+) from nicotinate D-ribonucleotide: step 1/1. Catalyzes the reversible adenylation of nicotinate mononucleotide (NaMN) to nicotinic acid adenine dinucleotide (NaAD). This Campylobacter fetus subsp. fetus (strain 82-40) protein is Probable nicotinate-nucleotide adenylyltransferase.